The sequence spans 240 residues: Peptidyl-tRNA hydrolase (240 aa).

Residue Y14 coordinates tRNA. Residue H19 is the Proton acceptor of the active site. Residues F64, N66, and N112 each contribute to the tRNA site. Residues E196 to P227 are disordered. Over residues H209–A218 the composition is skewed to polar residues.

Belongs to the PTH family. Monomer.

The protein localises to the cytoplasm. The enzyme catalyses an N-acyl-L-alpha-aminoacyl-tRNA + H2O = an N-acyl-L-amino acid + a tRNA + H(+). Functionally, hydrolyzes ribosome-free peptidyl-tRNAs (with 1 or more amino acids incorporated), which drop off the ribosome during protein synthesis, or as a result of ribosome stalling. In terms of biological role, catalyzes the release of premature peptidyl moieties from peptidyl-tRNA molecules trapped in stalled 50S ribosomal subunits, and thus maintains levels of free tRNAs and 50S ribosomes. This chain is Peptidyl-tRNA hydrolase, found in Mesorhizobium japonicum (strain LMG 29417 / CECT 9101 / MAFF 303099) (Mesorhizobium loti (strain MAFF 303099)).